Reading from the N-terminus, the 354-residue chain is Replication factor C subunit 5 (354 aa).

Residue 40-47 (YGPSGSGK) participates in ATP binding.

It belongs to the activator 1 small subunits family. As to quaternary structure, heterotetramer of subunits RFC2, RFC3, RFC4 and RFC5 that can form a complex with RFC1. In terms of tissue distribution, expressed in roots, leaves, shoot apical meristem (SAM), flag leaves and panicles.

It is found in the nucleus. Its function is as follows. May be involved in DNA replication and thus regulate cell proliferation. The protein is Replication factor C subunit 5 (RFC5) of Oryza sativa subsp. japonica (Rice).